Here is a 243-residue protein sequence, read N- to C-terminus: uncharacterized protein (243 aa).

This is an uncharacterized protein from Orgyia pseudotsugata multicapsid polyhedrosis virus (OpMNPV).